The sequence spans 227 residues: UPF0173 metal-dependent hydrolase YtkL (227 aa).

This sequence belongs to the UPF0173 family.

The protein is UPF0173 metal-dependent hydrolase YtkL (ytkL) of Bacillus subtilis (strain 168).